Here is a 68-residue protein sequence, read N- to C-terminus: Large ribosomal subunit protein bL33c (68 aa).

It belongs to the bacterial ribosomal protein bL33 family.

It localises to the plastid. The protein resides in the chloroplast. This Pinus koraiensis (Korean pine) protein is Large ribosomal subunit protein bL33c.